The following is a 298-amino-acid chain: Probable oxidoreductase (298 aa).

9–33 (VVTGGASGLGAETVRALAAAGAEVT) provides a ligand contact to NAD(+). Residue S139 participates in substrate binding. The active-site Proton acceptor is the Y165.

The protein belongs to the short-chain dehydrogenases/reductases (SDR) family.

This Streptomyces antibioticus protein is Probable oxidoreductase.